We begin with the raw amino-acid sequence, 129 residues long: Small ribosomal subunit protein uS11 (129 aa).

Belongs to the universal ribosomal protein uS11 family. As to quaternary structure, part of the 30S ribosomal subunit. Interacts with proteins S7 and S18. Binds to IF-3.

Located on the platform of the 30S subunit, it bridges several disparate RNA helices of the 16S rRNA. Forms part of the Shine-Dalgarno cleft in the 70S ribosome. This is Small ribosomal subunit protein uS11 from Lactobacillus gasseri (strain ATCC 33323 / DSM 20243 / BCRC 14619 / CIP 102991 / JCM 1131 / KCTC 3163 / NCIMB 11718 / NCTC 13722 / AM63).